Here is a 94-residue protein sequence, read N- to C-terminus: MQHSLVFFFAVILHLSHLLHLDASIHPFRLPFSSKPFLLIPMSNTTLPHTAWPLSFLHQTVSTLKAVAVTHSLWHLQIPVDCQACNRKSKKIYC.

The first 18 residues, 1–18, serve as a signal peptide directing secretion; it reads MQHSLVFFFAVILHLSHL. Asn44 carries an N-linked (GlcNAc...) asparagine glycan.

In terms of tissue distribution, specifically expressed in adult testis.

Its subcellular location is the secreted. In Homo sapiens (Human), this protein is Putative testis-specific prion protein (PRNT).